The sequence spans 929 residues: Transcription initiation factor TFIID subunit 3 (929 aa).

2 disordered regions span residues 131–152 (IVSS…TSAE) and 176–197 (LGKR…RPRL). Phosphoserine is present on residues S183, S199, S229, and S243. 2 disordered regions span residues 221-358 (TQKI…ETIQ) and 405-578 (DPFE…PWKE). Low complexity predominate over residues 265–288 (TKSFTPKTKTKTSSPGQKTKSPKT). The residue at position 266 (K266) is an N6-acetyllysine. Phosphoserine is present on residues S291, S297, and S301. 2 stretches are compositionally biased toward polar residues: residues 340–358 (PNRT…ETIQ) and 434–466 (PKAS…SWTM). T501 is subject to Phosphothreonine. Positions 504–514 (PLHKVYEEKTK) are enriched in basic and acidic residues. The segment covering 523–537 (KKLKKELKTKMKKKE) has biased composition (basic residues). Residues 538–578 (KQRDREREKDKNKDKSKEKDKVKEKEKDKETGRETKYPWKE) are compositionally biased toward basic and acidic residues. Residue K581 forms a Glycyl lysine isopeptide (Lys-Gly) (interchain with G-Cter in SUMO2) linkage. Basic and acidic residues-rich tracts occupy residues 603 to 612 (KLKDGLVRKE) and 621 to 648 (KDRE…DKMK). The tract at residues 603–658 (KLKDGLVRKEKEKHKDKKKDREKGKKDKDKREKEKVKDKGREDKMKAPAPPLVLPP) is disordered. Position 667 is a phosphoserine (S667). A compositionally biased stretch (basic and acidic residues) spans 692–701 (EKEKVKEKEK). The segment at 692-748 (EKEKVKEKEKKKDKKEKKKKKEKEKEKKEKEREKEKREREKREKEKEKHKHEKIKVE) is disordered. Residues 702–713 (KKDKKEKKKKKE) show a composition bias toward basic residues. The segment covering 714–737 (KEKEKKEKEREKEKREREKREKEK) has biased composition (basic and acidic residues). Residue K746 forms a Glycyl lysine isopeptide (Lys-Gly) (interchain with G-Cter in SUMO2) linkage. A Phosphoserine modification is found at S755. The residue at position 776 (K776) is an N6-acetyllysine. The segment covering 778-787 (VPAPEAKPAP) has biased composition (low complexity). The segment at 778–807 (VPAPEAKPAPSQNRPKTPPPAPAPAPGPML) is disordered. Pro residues predominate over residues 793–804 (KTPPPAPAPAPG). The PHD-type zinc-finger motif lies at 865–915 (IWICPGCNKPDDGSPMIGCDDCDDWYHWPCVGIMTAPPEEMQWFCPKCANK). Positions 868, 871, 883, 886, 891, 894, 909, and 912 each coordinate Zn(2+).

The protein belongs to the TAF3 family. As to quaternary structure, component of the TFIID basal transcription factor complex, composed of TATA-box-binding protein TBP, and a number of TBP-associated factors (TAFs), including TAF1, TAF2, TAF3, TAF4, TAF5, TAF6, TAF7, TAF8, TAF9, TAF10, TAF11, TAF12 and TAF13. Interacts with TAF10 via the histone fold. Interacts with TAF13, TBP, SAP130 and GCN5L2. Interacts with TBPL2.

Its subcellular location is the nucleus. Functionally, the TFIID basal transcription factor complex plays a major role in the initiation of RNA polymerase II (Pol II)-dependent transcription. TFIID recognizes and binds promoters with or without a TATA box via its subunit TBP, a TATA-box-binding protein, and promotes assembly of the pre-initiation complex (PIC). The TFIID complex consists of TBP and TBP-associated factors (TAFs), including TAF1, TAF2, TAF3, TAF4, TAF5, TAF6, TAF7, TAF8, TAF9, TAF10, TAF11, TAF12 and TAF13. The TFIID complex structure can be divided into 3 modules TFIID-A, TFIID-B, and TFIID-C. TAF3 forms the TFIID-A module together with TAF5 and TBP. Required in complex with TBPL2 for the differentiation of myoblasts into myocytes. The TAF3-TBPL2 complex replaces TFIID at specific promoters at an early stage in the differentiation process. The polypeptide is Transcription initiation factor TFIID subunit 3 (TAF3) (Homo sapiens (Human)).